The sequence spans 68 residues: Neuronal regeneration-related protein (68 aa).

The tract at residues 21–54 is disordered; the sequence is MEGRLPKGRLPVPKEVNRKKNDETNAASLTPLGS. Polar residues predominate over residues 44-54; that stretch reads TNAASLTPLGS.

In terms of assembly, interacts with the latency-associated peptides (LAP) of TGFB1 and TGFB2; the interaction results in a decrease in TGFB autoinduction. Interacts with FLNA. In terms of processing, phosphorylated on Ser-59. Phosphorylation decreases stability and activity.

Its subcellular location is the cytoplasm. Functionally, may have roles in neural function and cellular differentiation. Ectopic expression promotes axonal regeneration, induces differentiation of fibroblast into myofibroblast, induces myofibroblast ameboid migration, augments motility of gliomas, and increases retinoic-acid regulation of lipid-droplet biogenesis. Down-regulates the expression of TGFB1 and TGFB2 but not of TGFB3. May play a role in the regulation of alveolar generation. The sequence is that of Neuronal regeneration-related protein (NREP) from Pongo abelii (Sumatran orangutan).